The following is a 329-amino-acid chain: MDYLTMFYDGWRDLMDNKSDPRTRDYPLMSSPFPTIAISLTYAYIVKVLGPKLMENRKPFELRKVLIVYNAAQVIFSAWLFYESCIGGWLNGYNLRCEPVNYSYSPKAIRTAEGCWWYYFSKFTEFFDTFFFVMRKRYDQVSTLHVIHHGIMPVSVWWGVKFTPGGHSTFFGFLNTFVHIFMYAYYMLAAMGPKVQKYLWWKKYLTVMQMIQFVLVMVHSFQLFFKNDCNYPIGFAYFIGAHAVMFYFLFSNFYKRAYVKRDGKDKASVKANGHANGHVKALKDGDVAPTSNGQANGFHNTFSKFTTDMCNPALNSSTRQRVLVNAGNK.

The next 7 membrane-spanning stretches (helical) occupy residues 26–46 (YPLMSSPFPTIAISLTYAYIV), 66–86 (LIVYNAAQVIFSAWLFYESCI), 114–134 (GCWWYYFSKFTEFFDTFFFVM), 146–166 (VIHHGIMPVSVWWGVKFTPGG), 170–190 (FFGFLNTFVHIFMYAYYMLAA), 205–225 (LTVMQMIQFVLVMVHSFQLFF), and 233–253 (IGFAYFIGAHAVMFYFLFSNF).

This sequence belongs to the ELO family.

It is found in the membrane. It catalyses the reaction a very-long-chain acyl-CoA + malonyl-CoA + H(+) = a very-long-chain 3-oxoacyl-CoA + CO2 + CoA. Its function is as follows. Catalyzes the first and rate-limiting reaction of the four reactions that constitute the long-chain fatty acids elongation cycle. This endoplasmic reticulum-bound enzymatic process allows the addition of 2 carbons to the chain of long- and very long-chain fatty acids (VLCFAs) per cycle. This chain is Very long chain fatty acid elongase 7, found in Drosophila melanogaster (Fruit fly).